Consider the following 267-residue polypeptide: L-aspartate dehydrogenase (267 aa).

The NAD(+) site is built by Ala-124 and Asn-190. His-218 is a catalytic residue.

The protein belongs to the L-aspartate dehydrogenase family.

It catalyses the reaction L-aspartate + NADP(+) + H2O = oxaloacetate + NH4(+) + NADPH + H(+). The enzyme catalyses L-aspartate + NAD(+) + H2O = oxaloacetate + NH4(+) + NADH + H(+). It participates in cofactor biosynthesis; NAD(+) biosynthesis; iminoaspartate from L-aspartate (dehydrogenase route): step 1/1. In terms of biological role, specifically catalyzes the NAD or NADP-dependent dehydrogenation of L-aspartate to iminoaspartate. The polypeptide is L-aspartate dehydrogenase (Methanococcus maripaludis (strain C6 / ATCC BAA-1332)).